Here is a 464-residue protein sequence, read N- to C-terminus: Glutamate--tRNA ligase 1 (464 aa).

The short motif at 10-20 is the 'HIGH' region element; that stretch reads PSPTGYLHIGG. Positions 238–242 match the 'KMSKS' region motif; sequence KLSKR. K241 lines the ATP pocket.

It belongs to the class-I aminoacyl-tRNA synthetase family. Glutamate--tRNA ligase type 1 subfamily. In terms of assembly, monomer.

It is found in the cytoplasm. The catalysed reaction is tRNA(Glu) + L-glutamate + ATP = L-glutamyl-tRNA(Glu) + AMP + diphosphate. Its function is as follows. Catalyzes the attachment of glutamate to tRNA(Glu) in a two-step reaction: glutamate is first activated by ATP to form Glu-AMP and then transferred to the acceptor end of tRNA(Glu). The protein is Glutamate--tRNA ligase 1 of Helicobacter hepaticus (strain ATCC 51449 / 3B1).